The following is a 453-amino-acid chain: Tubulin beta-2 chain (453 aa).

GTP contacts are provided by glutamine 11, glutamate 71, serine 140, glycine 144, threonine 145, glycine 146, asparagine 206, and asparagine 228. Residue glutamate 71 coordinates Mg(2+).

The protein belongs to the tubulin family. In terms of assembly, dimer of alpha and beta chains. A typical microtubule is a hollow water-filled tube with an outer diameter of 25 nm and an inner diameter of 15 nM. Alpha-beta heterodimers associate head-to-tail to form protofilaments running lengthwise along the microtubule wall with the beta-tubulin subunit facing the microtubule plus end conferring a structural polarity. Microtubules usually have 13 protofilaments but different protofilament numbers can be found in some organisms and specialized cells. It depends on Mg(2+) as a cofactor.

The protein localises to the cytoplasm. Its subcellular location is the cytoskeleton. Functionally, tubulin is the major constituent of microtubules, a cylinder consisting of laterally associated linear protofilaments composed of alpha- and beta-tubulin heterodimers. Microtubules grow by the addition of GTP-tubulin dimers to the microtubule end, where a stabilizing cap forms. Below the cap, tubulin dimers are in GDP-bound state, owing to GTPase activity of alpha-tubulin. This Geotrichum candidum (Oospora lactis) protein is Tubulin beta-2 chain.